We begin with the raw amino-acid sequence, 209 residues long: Glycerol-3-phosphate acyltransferase (209 aa).

Transmembrane regions (helical) follow at residues 13–33 (ALIA…GLLL), 63–83 (LAAA…LIAQ), 94–114 (PGLL…WLGF), 127–147 (LLGI…SIAF), and 151–171 (YSSL…WILG).

It belongs to the PlsY family. In terms of assembly, probably interacts with PlsX.

It is found in the cell inner membrane. It carries out the reaction an acyl phosphate + sn-glycerol 3-phosphate = a 1-acyl-sn-glycero-3-phosphate + phosphate. It functions in the pathway lipid metabolism; phospholipid metabolism. In terms of biological role, catalyzes the transfer of an acyl group from acyl-phosphate (acyl-PO(4)) to glycerol-3-phosphate (G3P) to form lysophosphatidic acid (LPA). This enzyme utilizes acyl-phosphate as fatty acyl donor, but not acyl-CoA or acyl-ACP. This Allorhizobium ampelinum (strain ATCC BAA-846 / DSM 112012 / S4) (Agrobacterium vitis (strain S4)) protein is Glycerol-3-phosphate acyltransferase.